The following is a 213-amino-acid chain: 24 kDa ookinete surface protein (213 aa).

The first 28 residues, 1–28 (MNFKYSFIFLFFIQLAIRYNNAKITVDT), serve as a signal peptide directing secretion. Residues 30–59 (CKGGKLIQMSNHYECKCPSGYALKTENTCE) enclose the EGF-like 1; truncated domain. EGF-like domains lie at 60–108 (PIVK…NICK) and 108–148 (KPTR…GKCT). 6 cysteine pairs are disulfide-bonded: Cys-64/Cys-80, Cys-74/Cys-94, Cys-96/Cys-107, Cys-112/Cys-122, Cys-117/Cys-134, and Cys-136/Cys-147. Residues 151–175 (GETKCLLKCKAAEECKLTGKHYECV) enclose the EGF-like 4; truncated domain. Asn-190 carries the GPI-anchor amidated asparagine lipid modification. Asn-190 carries an N-linked (GlcNAc...) asparagine glycan. Residues 191 to 213 (SSFMNGMSIISIIALLVIYVIVM) constitute a propeptide, removed in mature form.

The protein localises to the cell membrane. This Plasmodium berghei (strain Anka) protein is 24 kDa ookinete surface protein.